A 726-amino-acid polypeptide reads, in one-letter code: Methionine--tRNA ligase (726 aa).

The short motif at 12–22 (PYVNNIPHLGN) is the 'HIGH' region element. 4 residues coordinate Zn(2+): Cys143, Cys146, Cys155, and Cys158. Residues 330 to 334 (KFSKS) carry the 'KMSKS' region motif. Lys333 is a binding site for ATP. Residues 562-667 (FSEQICLKTV…DNPIPGERVI (106 aa)) form the tRNA-binding domain.

This sequence belongs to the class-I aminoacyl-tRNA synthetase family. MetG type 1 subfamily. In terms of assembly, homodimer. Requires Zn(2+) as cofactor.

The protein localises to the cytoplasm. The catalysed reaction is tRNA(Met) + L-methionine + ATP = L-methionyl-tRNA(Met) + AMP + diphosphate. Its function is as follows. Is required not only for elongation of protein synthesis but also for the initiation of all mRNA translation through initiator tRNA(fMet) aminoacylation. The chain is Methionine--tRNA ligase from Borrelia recurrentis (strain A1).